A 367-amino-acid chain; its full sequence is tRNA-specific 2-thiouridylase MnmA (367 aa).

ATP contacts are provided by residues 13–20 and Met39; that span reads GLSGGVDS. Residues 99-101 are interaction with target base in tRNA; the sequence is NPD. Cys104 acts as the Nucleophile in catalysis. Residues Cys104 and Cys200 are joined by a disulfide bond. Gly128 is an ATP binding site. Residues 150 to 152 are interaction with tRNA; the sequence is KDQ. The Cysteine persulfide intermediate role is filled by Cys200. The segment at 307 to 308 is interaction with tRNA; sequence RY.

This sequence belongs to the MnmA/TRMU family.

It is found in the cytoplasm. It catalyses the reaction S-sulfanyl-L-cysteinyl-[protein] + uridine(34) in tRNA + AH2 + ATP = 2-thiouridine(34) in tRNA + L-cysteinyl-[protein] + A + AMP + diphosphate + H(+). Its function is as follows. Catalyzes the 2-thiolation of uridine at the wobble position (U34) of tRNA, leading to the formation of s(2)U34. The sequence is that of tRNA-specific 2-thiouridylase MnmA from Neisseria meningitidis serogroup B (strain ATCC BAA-335 / MC58).